A 232-amino-acid polypeptide reads, in one-letter code: Endonuclease NucS (232 aa).

This sequence belongs to the NucS endonuclease family.

The protein resides in the cytoplasm. Functionally, cleaves both 3' and 5' ssDNA extremities of branched DNA structures. The protein is Endonuclease NucS of Mycobacteroides abscessus (strain ATCC 19977 / DSM 44196 / CCUG 20993 / CIP 104536 / JCM 13569 / NCTC 13031 / TMC 1543 / L948) (Mycobacterium abscessus).